The sequence spans 64 residues: MYLQCYINEKGEKVYTTKKESPLGLATESAHPARFSPDDKYSKQRVLLKKRFGLLPTQNAPLQY.

It belongs to the NOP10 family. As to quaternary structure, component of the small nucleolar ribonucleoprotein particles containing H/ACA-type snoRNAs (H/ACA snoRNPs).

It localises to the nucleus. Its subcellular location is the nucleolus. In terms of biological role, required for ribosome biogenesis. Part of a complex which catalyzes pseudouridylation of rRNA. This involves the isomerization of uridine such that the ribose is subsequently attached to C5, instead of the normal N1. Pseudouridine ('psi') residues may serve to stabilize the conformation of rRNAs. This Arabidopsis thaliana (Mouse-ear cress) protein is H/ACA ribonucleoprotein complex subunit 3-like protein.